The following is a 174-amino-acid chain: MQHFESSDKIEKDDDTSRIKLRSSSLAAPILEAVQEAQPFEEATFSNLQKIHPLTENSTCNGYVIYDKDGNLKSMKDTFGRNIKTPDISNPTRARNERPLDTIRGFEYSITKDPRWLQELETSKLGFKPRPGFAVINQDSQASINLSQLEEKVMESQKKKEKRHISRLSRLLCR.

Residues 78–97 (TFGRNIKTPDISNPTRARNE) form a disordered region.

This sequence to yeast YMR295c.

This is an uncharacterized protein from Saccharomyces cerevisiae (strain ATCC 204508 / S288c) (Baker's yeast).